The chain runs to 247 residues: Probable transcriptional regulatory protein TDE_1487 (247 aa).

It belongs to the TACO1 family.

Its subcellular location is the cytoplasm. In Treponema denticola (strain ATCC 35405 / DSM 14222 / CIP 103919 / JCM 8153 / KCTC 15104), this protein is Probable transcriptional regulatory protein TDE_1487.